A 77-amino-acid polypeptide reads, in one-letter code: Translation initiation factor IF-1, chloroplastic (77 aa).

One can recognise an S1-like domain in the interval 1–71; that stretch reads MKEQKWIHEG…TRGRIIYRLR (71 aa).

The protein belongs to the IF-1 family. As to quaternary structure, component of the 30S ribosomal translation pre-initiation complex which assembles on the 30S ribosome in the order IF-2 and IF-3, IF-1 and N-formylmethionyl-tRNA(fMet); mRNA recruitment can occur at any time during PIC assembly.

The protein localises to the plastid. It is found in the chloroplast. Functionally, one of the essential components for the initiation of protein synthesis. Stabilizes the binding of IF-2 and IF-3 on the 30S subunit to which N-formylmethionyl-tRNA(fMet) subsequently binds. Helps modulate mRNA selection, yielding the 30S pre-initiation complex (PIC). Upon addition of the 50S ribosomal subunit IF-1, IF-2 and IF-3 are released leaving the mature 70S translation initiation complex. This Garrya elliptica (Wavyleaf silktassel) protein is Translation initiation factor IF-1, chloroplastic.